Consider the following 132-residue polypeptide: ATP synthase epsilon chain, chloroplastic (132 aa).

At T2 the chain carries N-acetylthreonine.

This sequence belongs to the ATPase epsilon chain family. In terms of assembly, F-type ATPases have 2 components, CF(1) - the catalytic core - and CF(0) - the membrane proton channel. CF(1) has five subunits: alpha(3), beta(3), gamma(1), delta(1), epsilon(1). CF(0) has three main subunits: a, b and c.

Its subcellular location is the plastid. The protein localises to the chloroplast thylakoid membrane. In terms of biological role, produces ATP from ADP in the presence of a proton gradient across the membrane. The polypeptide is ATP synthase epsilon chain, chloroplastic (Arabidopsis thaliana (Mouse-ear cress)).